A 342-amino-acid polypeptide reads, in one-letter code: 4-hydroxythreonine-4-phosphate dehydrogenase (342 aa).

Substrate contacts are provided by His-140 and Thr-141. Positions 175, 220, and 275 each coordinate a divalent metal cation. Lys-283, Asn-292, and Arg-301 together coordinate substrate.

Belongs to the PdxA family. As to quaternary structure, homodimer. The cofactor is Zn(2+). Mg(2+) is required as a cofactor. Co(2+) serves as cofactor.

The protein localises to the cytoplasm. The catalysed reaction is 4-(phosphooxy)-L-threonine + NAD(+) = 3-amino-2-oxopropyl phosphate + CO2 + NADH. It participates in cofactor biosynthesis; pyridoxine 5'-phosphate biosynthesis; pyridoxine 5'-phosphate from D-erythrose 4-phosphate: step 4/5. Its function is as follows. Catalyzes the NAD(P)-dependent oxidation of 4-(phosphooxy)-L-threonine (HTP) into 2-amino-3-oxo-4-(phosphooxy)butyric acid which spontaneously decarboxylates to form 3-amino-2-oxopropyl phosphate (AHAP). The polypeptide is 4-hydroxythreonine-4-phosphate dehydrogenase (Rhizobium meliloti (strain 1021) (Ensifer meliloti)).